A 326-amino-acid polypeptide reads, in one-letter code: MGVHILSTGSSVPNFSVENQQFEDIIETSDHWISTRTGIKKRHLAPSSTSLTKLAAEAANDALSKASINAEDIDLIILATSTPDDLFGSASQLQAEIGATSSTAFDITAACSGFIIALVTASQFIQAGSYNKVLVVGADTMSRWIDWSDRSSCILFGDGAGAVLIGESSINSILGFKLCTDGRLNSHLQLMNSPSDSQQFGLTTVPKGRYDSIRMNGKEVYKFAVFQVPIVIKNCLNDVNISIDEVDWFILHQANIRILEAIATRLSIPLSKMITNLENYGNTSAASIPLALDEAIKEKKIQPGQVVVLAGFGAGLTWGAIVLKWQ.

Residues Cys111 and His252 contribute to the active site. The ACP-binding stretch occupies residues 253 to 257; the sequence is QANIR. Asn282 is a catalytic residue.

The protein belongs to the thiolase-like superfamily. FabH family. In terms of assembly, homodimer.

It localises to the plastid. It is found in the chloroplast. It catalyses the reaction malonyl-[ACP] + acetyl-CoA + H(+) = 3-oxobutanoyl-[ACP] + CO2 + CoA. The protein operates within lipid metabolism; fatty acid biosynthesis. Functionally, catalyzes the condensation reaction of fatty acid synthesis by the addition to an acyl acceptor of two carbons from malonyl-ACP. Catalyzes the first condensation reaction which initiates fatty acid synthesis and may therefore play a role in governing the total rate of fatty acid production. Possesses both acetoacetyl-ACP synthase and acetyl transacylase activities. Its substrate specificity determines the biosynthesis of branched-chain and/or straight-chain of fatty acids. This chain is Beta-ketoacyl-[acyl-carrier-protein] synthase III, found in Porphyra purpurea (Red seaweed).